Consider the following 94-residue polypeptide: Large ribosomal subunit protein uL23 (94 aa).

This sequence belongs to the universal ribosomal protein uL23 family. In terms of assembly, part of the 50S ribosomal subunit. Contacts protein L29, and trigger factor when it is bound to the ribosome.

One of the early assembly proteins it binds 23S rRNA. One of the proteins that surrounds the polypeptide exit tunnel on the outside of the ribosome. Forms the main docking site for trigger factor binding to the ribosome. The protein is Large ribosomal subunit protein uL23 of Pelobacter propionicus (strain DSM 2379 / NBRC 103807 / OttBd1).